The following is a 570-amino-acid chain: Proline--tRNA ligase (570 aa).

This sequence belongs to the class-II aminoacyl-tRNA synthetase family. ProS type 1 subfamily. As to quaternary structure, homodimer.

The protein localises to the cytoplasm. The catalysed reaction is tRNA(Pro) + L-proline + ATP = L-prolyl-tRNA(Pro) + AMP + diphosphate. In terms of biological role, catalyzes the attachment of proline to tRNA(Pro) in a two-step reaction: proline is first activated by ATP to form Pro-AMP and then transferred to the acceptor end of tRNA(Pro). As ProRS can inadvertently accommodate and process non-cognate amino acids such as alanine and cysteine, to avoid such errors it has two additional distinct editing activities against alanine. One activity is designated as 'pretransfer' editing and involves the tRNA(Pro)-independent hydrolysis of activated Ala-AMP. The other activity is designated 'posttransfer' editing and involves deacylation of mischarged Ala-tRNA(Pro). The misacylated Cys-tRNA(Pro) is not edited by ProRS. The sequence is that of Proline--tRNA ligase from Clostridium beijerinckii (strain ATCC 51743 / NCIMB 8052) (Clostridium acetobutylicum).